The sequence spans 612 residues: Isocitrate dehydrogenase kinase/phosphatase (612 aa).

ATP contacts are provided by residues 327 to 333 (APGIKGL) and Lys348. Asp383 is an active-site residue. Residues 593 to 612 (AGAASNEQDAPDAGRSVRAA) form a disordered region.

It belongs to the AceK family.

Its subcellular location is the cytoplasm. The catalysed reaction is L-seryl-[isocitrate dehydrogenase] + ATP = O-phospho-L-seryl-[isocitrate dehydrogenase] + ADP + H(+). Bifunctional enzyme which can phosphorylate or dephosphorylate isocitrate dehydrogenase (IDH) on a specific serine residue. This is a regulatory mechanism which enables bacteria to bypass the Krebs cycle via the glyoxylate shunt in response to the source of carbon. When bacteria are grown on glucose, IDH is fully active and unphosphorylated, but when grown on acetate or ethanol, the activity of IDH declines drastically concomitant with its phosphorylation. The sequence is that of Isocitrate dehydrogenase kinase/phosphatase from Paraburkholderia xenovorans (strain LB400).